A 167-amino-acid chain; its full sequence is NADH-quinone oxidoreductase subunit B 1 (167 aa).

Positions 38, 39, 104, and 133 each coordinate [4Fe-4S] cluster.

It belongs to the complex I 20 kDa subunit family. As to quaternary structure, NDH-1 is composed of 14 different subunits. Subunits NuoB, C, D, E, F, and G constitute the peripheral sector of the complex. The cofactor is [4Fe-4S] cluster.

The protein resides in the cell membrane. The enzyme catalyses a quinone + NADH + 5 H(+)(in) = a quinol + NAD(+) + 4 H(+)(out). NDH-1 shuttles electrons from NADH, via FMN and iron-sulfur (Fe-S) centers, to quinones in the respiratory chain. The immediate electron acceptor for the enzyme in this species is believed to be ubiquinone. Couples the redox reaction to proton translocation (for every two electrons transferred, four hydrogen ions are translocated across the cytoplasmic membrane), and thus conserves the redox energy in a proton gradient. The protein is NADH-quinone oxidoreductase subunit B 1 of Roseiflexus castenholzii (strain DSM 13941 / HLO8).